The following is a 290-amino-acid chain: Aquaporin PIP2-1 (290 aa).

Positions 1–20 (MGKDDVIESGAGGGEFAAKD) are disordered. The next 2 membrane-spanning stretches (helical) occupy residues 43–63 (AVIAEFIATLLFLYITVATVI) and 80–100 (CGGVGVLGIAWAFGGMIFVLV). The short motif at 112-114 (NPA) is the NPA 1 element. The next 3 helical transmembrane spans lie at 131 to 151 (LLYIVAQCLGAICGVGLVKAF), 173 to 193 (GTGLGAEIIGTFVLVYTVFSA), and 205 to 225 (VPVLAPLPIGFAVFMVHLATI). Positions 233-235 (NPA) match the NPA 2 motif. The helical transmembrane segment at 255–275 (IFWVGPLVGAAIAAFYHQYIL) threads the bilayer.

The protein belongs to the MIP/aquaporin (TC 1.A.8) family. PIP (TC 1.A.8.11) subfamily. As to quaternary structure, homomers. Can interact with PIP1-2 to form heteromers. As to expression, expressed in roots.

Its subcellular location is the cell membrane. Water channel required to facilitate the transport of water across cell membrane. Active as homomers. Increased activity when heteromerization with PIP1-2. The polypeptide is Aquaporin PIP2-1 (PIP2-1) (Zea mays (Maize)).